Consider the following 574-residue polypeptide: Adenine deaminase (574 aa).

Belongs to the metallo-dependent hydrolases superfamily. Adenine deaminase family. Requires Mn(2+) as cofactor.

It carries out the reaction adenine + H2O + H(+) = hypoxanthine + NH4(+). This chain is Adenine deaminase, found in Thermosipho africanus (strain TCF52B).